A 438-amino-acid polypeptide reads, in one-letter code: Trigger factor (438 aa).

The region spanning 160–231 (SDQVTIEEQG…IMDVKTKQLQ (72 aa)) is the PPIase FKBP-type domain. Positions 407–438 (AQLSGPQAETVAADQGEQQAEGQEESAEKSEE) are disordered. Low complexity predominate over residues 418-427 (AADQGEQQAE).

Belongs to the FKBP-type PPIase family. Tig subfamily.

It is found in the cytoplasm. The enzyme catalyses [protein]-peptidylproline (omega=180) = [protein]-peptidylproline (omega=0). Functionally, involved in protein export. Acts as a chaperone by maintaining the newly synthesized protein in an open conformation. Functions as a peptidyl-prolyl cis-trans isomerase. The protein is Trigger factor of Deinococcus deserti (strain DSM 17065 / CIP 109153 / LMG 22923 / VCD115).